The primary structure comprises 210 residues: Large ribosomal subunit protein uL3 (210 aa).

Positions 136-156 (THGTEKAHRSGGSIGNNTEPG) are disordered.

The protein belongs to the universal ribosomal protein uL3 family. Part of the 50S ribosomal subunit. Forms a cluster with proteins L14 and L19.

One of the primary rRNA binding proteins, it binds directly near the 3'-end of the 23S rRNA, where it nucleates assembly of the 50S subunit. This chain is Large ribosomal subunit protein uL3, found in Solidesulfovibrio magneticus (strain ATCC 700980 / DSM 13731 / RS-1) (Desulfovibrio magneticus).